A 433-amino-acid polypeptide reads, in one-letter code: Ligand-dependent corepressor (433 aa).

A disordered region spans residues 1-51 (MQRMIQQFAAEYTSKNSSTQDPSQPNSTKNQSLPKASPVTTSPTAATTQNP). The segment covering 13–34 (TSKNSSTQDPSQPNSTKNQSLP) has biased composition (polar residues). Residues 36-48 (ASPVTTSPTAATT) show a composition bias toward low complexity. The residue at position 42 (Ser-42) is a Phosphoserine. The short motif at 53–57 (LSKLL) is the Interaction with nuclear receptors element. A Phosphoserine modification is found at Ser-63. The tract at residues 64-147 (PLDLTVRKSQ…GTREGFGHST (84 aa)) is disordered. Residues 93–110 (AGSTSLSHSPGCSSTQGN) show a composition bias toward polar residues. Ser-249 bears the Phosphoserine mark. Residue Lys-254 forms a Glycyl lysine isopeptide (Lys-Gly) (interchain with G-Cter in SUMO2) linkage. The segment at 299–348 (QSRKSMLDAGPDSWGSDAEQSTSGQPYPTSDQEGDPGSKQPRKKRGRYRQ) is disordered. Over residues 316–329 (AEQSTSGQPYPTSD) the composition is skewed to polar residues. Positions 339 to 345 (PRKKRGR) match the Nuclear localization signal motif. The region spanning 340–392 (RKKRGRYRQYNSEILEEAISVVMSGKMSVSKAQSIYGIPHSTLEYKVKERLGT) is the HTH psq-type domain. Arg-345 participates in a covalent cross-link: Glycyl lysine isopeptide (Lys-Gly) (interchain with G-Cter in SUMO2). The H-T-H motif DNA-binding region spans 368-388 (VSKAQSIYGIPHSTLEYKVKE). A Glycyl lysine isopeptide (Lys-Gly) (interchain with G-Cter in SUMO2) cross-link involves residue Gly-391. The segment at 393 to 412 (LKNPPKKKMKLMRSEGPDVS) is disordered. Residue Lys-414 forms a Glycyl lysine isopeptide (Lys-Gly) (interchain with G-Cter in SUMO2) linkage.

In terms of assembly, interacts with ESR1 and ESR2 in the presence of estradiol. Interacts with CTBP1, HDAC3 and HDAC6. Component of a large corepressor complex that contains about 20 proteins, including CTBP1, CTBP2, HDAC1 and HDAC2. Ubiquitous.

The protein resides in the nucleus. May act as transcription activator that binds DNA elements with the sequence 5'-CCCTATCGATCGATCTCTACCT-3'. Repressor of ligand-dependent transcription activation by target nuclear receptors. Repressor of ligand-dependent transcription activation by ESR1, ESR2, NR3C1, PGR, RARA, RARB, RARG, RXRA and VDR. The polypeptide is Ligand-dependent corepressor (Homo sapiens (Human)).